Consider the following 147-residue polypeptide: Cytochrome b-c1 complex subunit 6, mitochondrial (147 aa).

The disordered stretch occupies residues 25–89; sequence AEDDDNEQHE…DLREHFKNTE (65 aa). Over residues 41 to 78 the composition is skewed to acidic residues; that stretch reads EEKEEENGDEDEDEDEDEDDDDDDDEDEEEEEEVTDQL. Over residues 79–89 the composition is skewed to basic and acidic residues; the sequence is EDLREHFKNTE. A disulfide bridge connects residues cysteine 101 and cysteine 123.

Belongs to the UQCRH/QCR6 family. In terms of assembly, component of the ubiquinol-cytochrome c oxidoreductase (cytochrome b-c1 complex, complex III, CIII), a multisubunit enzyme composed of 10 subunits. The complex is composed of 3 respiratory subunits cytochrome b (COB), cytochrome c1 (CYT1) and Rieske protein (RIP1), 2 core protein subunits COR1 and QCR2, and 5 low-molecular weight protein subunits QCR6, QCR7, QCR8, QCR9 and QCR10. The complex exists as an obligatory dimer and forms supercomplexes (SCs) in the inner mitochondrial membrane with a monomer or a dimer of cytochrome c oxidase (complex IV, CIV), resulting in 2 different assemblies (supercomplexes III(2)IV and III(2)IV(2)). QCR6 interacts with COX5A at the CIII-CIV interface.

It localises to the mitochondrion inner membrane. Functionally, component of the ubiquinol-cytochrome c oxidoreductase, a multisubunit transmembrane complex that is part of the mitochondrial electron transport chain which drives oxidative phosphorylation. The respiratory chain contains 3 multisubunit complexes succinate dehydrogenase (complex II, CII), ubiquinol-cytochrome c oxidoreductase (cytochrome b-c1 complex, complex III, CIII) and cytochrome c oxidase (complex IV, CIV), that cooperate to transfer electrons derived from NADH and succinate to molecular oxygen, creating an electrochemical gradient over the inner membrane that drives transmembrane transport and the ATP synthase. The cytochrome b-c1 complex catalyzes electron transfer from ubiquinol to cytochrome c, linking this redox reaction to translocation of protons across the mitochondrial inner membrane, with protons being carried across the membrane as hydrogens on the quinol. In the process called Q cycle, 2 protons are consumed from the matrix, 4 protons are released into the intermembrane space and 2 electrons are passed to cytochrome c. The chain is Cytochrome b-c1 complex subunit 6, mitochondrial (QCR6) from Saccharomyces cerevisiae (strain ATCC 204508 / S288c) (Baker's yeast).